The sequence spans 91 residues: Small ribosomal subunit protein bS18 (91 aa).

The protein belongs to the bacterial ribosomal protein bS18 family. As to quaternary structure, part of the 30S ribosomal subunit. Forms a tight heterodimer with protein bS6.

Its function is as follows. Binds as a heterodimer with protein bS6 to the central domain of the 16S rRNA, where it helps stabilize the platform of the 30S subunit. This Burkholderia multivorans (strain ATCC 17616 / 249) protein is Small ribosomal subunit protein bS18.